A 123-amino-acid polypeptide reads, in one-letter code: Venom peptide MmKTx1 (123 aa).

A signal peptide spans 1–21 (MSIKISAIALFMLSFTVFVNG).

It belongs to the scorpion La1-like peptide family. Post-translationally, contains 4 disulfide bonds. Expressed by the venom gland.

It is found in the secreted. This chain is Venom peptide MmKTx1, found in Olivierus martensii (Manchurian scorpion).